We begin with the raw amino-acid sequence, 415 residues long: Actin-like protein 7B (415 aa).

The tract at residues 1 to 31 is disordered; that stretch reads MATRNSPMPLGTAQGDPGEAGTRPGPDASLR. Position 6 is a phosphoserine (S6).

The protein belongs to the actin family. As to expression, detected only in the testis and, to a lesser extent, in the prostate.

It localises to the cytoplasm. It is found in the cytoskeleton. In Homo sapiens (Human), this protein is Actin-like protein 7B (ACTL7B).